The sequence spans 302 residues: Urease accessory protein UreD 1 (302 aa).

Belongs to the UreD family. In terms of assembly, ureD, UreF and UreG form a complex that acts as a GTP-hydrolysis-dependent molecular chaperone, activating the urease apoprotein by helping to assemble the nickel containing metallocenter of UreC. The UreE protein probably delivers the nickel.

The protein localises to the cytoplasm. Functionally, required for maturation of urease via the functional incorporation of the urease nickel metallocenter. The sequence is that of Urease accessory protein UreD 1 from Psychrobacter cryohalolentis (strain ATCC BAA-1226 / DSM 17306 / VKM B-2378 / K5).